A 274-amino-acid polypeptide reads, in one-letter code: Coat protein (274 aa).

Residues 88–112 (RPAKQVLKGSSSKSQQRDEGEVVFT) form a disordered region. The span at 102-112 (QQRDEGEVVFT) shows a compositional bias: basic and acidic residues.

The protein resides in the virion. The chain is Coat protein from Rubus idaeus (Raspberry).